We begin with the raw amino-acid sequence, 120 residues long: MQRSSVLLCLLVIEATFCSLLMAQPDGVNTPTCCYTFNKQIPLKRVKGYERITSSRCPQEAVIFRTLKNKEVCADPTQKWVQDYIAKLDQRTQQKQNSTAPQTSKPLNIRFTTQDPKNRS.

An N-terminal signal peptide occupies residues 1 to 23; that stretch reads MQRSSVLLCLLVIEATFCSLLMA. Pyrrolidone carboxylic acid is present on Q24. 2 cysteine pairs are disulfide-bonded: C33-C57 and C34-C73. The tract at residues 91 to 120 is disordered; it reads RTQQKQNSTAPQTSKPLNIRFTTQDPKNRS. Residues 93–120 are compositionally biased toward polar residues; the sequence is QQKQNSTAPQTSKPLNIRFTTQDPKNRS. N97 carries N-linked (GlcNAc...) asparagine glycosylation.

This sequence belongs to the intercrine beta (chemokine CC) family. In terms of assembly, monomer or homodimer; in equilibrium. Is tethered on endothelial cells by glycosaminoglycan (GAG) side chains of proteoglycans. Interacts with TNFAIP6 (via Link domain). Processing at the N-terminus can regulate receptor and target cell selectivity. Deletion of the N-terminal residue converts it from an activator of basophil to an eosinophil chemoattractant. In terms of processing, N-Glycosylated.

It is found in the secreted. Functionally, acts as a ligand for C-C chemokine receptor CCR2. Signals through binding and activation of CCR2 and induces a strong chemotactic response and mobilization of intracellular calcium ions. Exhibits a chemotactic activity for monocytes and basophils but not neutrophils or eosinophils. Plays an important role in mediating peripheral nerve injury-induced neuropathic pain. Increases NMDA-mediated synaptic transmission in both dopamine D1 and D2 receptor-containing neurons, which may be caused by MAPK/ERK-dependent phosphorylation of GRIN2B/NMDAR2B. In Cavia porcellus (Guinea pig), this protein is C-C motif chemokine 2 (CCL2).